The chain runs to 367 residues: Outer membrane porin C (367 aa).

The signal sequence occupies residues 1-21 (MKVKVLSLLVPALLVAGAANA).

The protein belongs to the Gram-negative porin family. As to quaternary structure, homotrimer.

Its subcellular location is the cell outer membrane. Forms pores that allow passive diffusion of small molecules across the outer membrane. The polypeptide is Outer membrane porin C (ompC) (Escherichia coli O157:H7).